The chain runs to 144 residues: Large ribosomal subunit protein uL16 (144 aa).

The protein belongs to the universal ribosomal protein uL16 family. In terms of assembly, part of the 50S ribosomal subunit.

Functionally, binds 23S rRNA and is also seen to make contacts with the A and possibly P site tRNAs. The sequence is that of Large ribosomal subunit protein uL16 from Halothermothrix orenii (strain H 168 / OCM 544 / DSM 9562).